Reading from the N-terminus, the 251-residue chain is uncharacterized protein (251 aa).

N-linked (GlcNAc...) asparagine; by host glycans are attached at residues Asn-149, Asn-152, and Asn-207. Residues 226-246 traverse the membrane as a helical segment; sequence YLIFIIIIIIFIILILLWIKY.

Belongs to the glycosyltransferase 32 family.

It localises to the membrane. This is an uncharacterized protein from Acanthamoeba polyphaga (Amoeba).